We begin with the raw amino-acid sequence, 400 residues long: Serine/threonine transporter SstT (400 aa).

10 consecutive transmembrane segments (helical) span residues 11-31 (IGLV…GWLA), 45-65 (FVGA…MAAI), 81-101 (IMYM…SFLF), 138-158 (AIAE…GFAL), 175-195 (AISQ…LGLV), 213-233 (ILMV…PLII), 242-264 (YPLV…SSAA), 295-315 (MAGA…TLGI), 327-347 (LVAT…LLLI), and 354-374 (FSIP…IGVI).

It belongs to the dicarboxylate/amino acid:cation symporter (DAACS) (TC 2.A.23) family.

It localises to the cell inner membrane. The enzyme catalyses L-serine(in) + Na(+)(in) = L-serine(out) + Na(+)(out). It catalyses the reaction L-threonine(in) + Na(+)(in) = L-threonine(out) + Na(+)(out). Functionally, involved in the import of serine and threonine into the cell, with the concomitant import of sodium (symport system). The polypeptide is Serine/threonine transporter SstT (Psychrobacter cryohalolentis (strain ATCC BAA-1226 / DSM 17306 / VKM B-2378 / K5)).